The sequence spans 768 residues: Lon protease (768 aa).

Residues 4–198 (APFLPIRDLV…RILDEIVAEM (195 aa)) form the Lon N-terminal domain. Residue 349-356 (GPPGIGKT) participates in ATP binding. Residues 586 to 768 (TGKIGVVNGL…DDVSKLVFVK (183 aa)) enclose the Lon proteolytic domain. Catalysis depends on residues Ser674 and Lys717.

Belongs to the peptidase S16 family. In terms of assembly, homohexamer. Organized in a ring with a central cavity.

The protein resides in the cytoplasm. It carries out the reaction Hydrolysis of proteins in presence of ATP.. ATP-dependent serine protease that mediates the selective degradation of mutant and abnormal proteins as well as certain short-lived regulatory proteins. Required for cellular homeostasis and for survival from DNA damage and developmental changes induced by stress. Degrades polypeptides processively to yield small peptide fragments that are 5 to 10 amino acids long. Binds to DNA in a double-stranded, site-specific manner. The chain is Lon protease from Fusobacterium nucleatum subsp. nucleatum (strain ATCC 25586 / DSM 15643 / BCRC 10681 / CIP 101130 / JCM 8532 / KCTC 2640 / LMG 13131 / VPI 4355).